We begin with the raw amino-acid sequence, 123 residues long: Small ribosomal subunit protein uS13 (123 aa).

The disordered stretch occupies residues 95-123 (GLPVRGQKTKTNARTRKGPKRAISGKKNK).

This sequence belongs to the universal ribosomal protein uS13 family. In terms of assembly, part of the 30S ribosomal subunit. Forms a loose heterodimer with protein S19. Forms two bridges to the 50S subunit in the 70S ribosome.

In terms of biological role, located at the top of the head of the 30S subunit, it contacts several helices of the 16S rRNA. In the 70S ribosome it contacts the 23S rRNA (bridge B1a) and protein L5 of the 50S subunit (bridge B1b), connecting the 2 subunits; these bridges are implicated in subunit movement. Contacts the tRNAs in the A and P-sites. In Clostridium novyi (strain NT), this protein is Small ribosomal subunit protein uS13.